The primary structure comprises 721 residues: Polyphosphate kinase (721 aa).

Asn-54 contributes to the ATP binding site. Residues Arg-379 and Arg-409 each coordinate Mg(2+). The 35-residue stretch at Thr-434–Thr-468 folds into the PLD phosphodiesterase domain. His-439 acts as the Phosphohistidine intermediate in catalysis. Residues Tyr-472, Arg-568, and His-596 each coordinate ATP.

This sequence belongs to the polyphosphate kinase 1 (PPK1) family. Requires Mg(2+) as cofactor. Post-translationally, an intermediate of this reaction is the autophosphorylated ppk in which a phosphate is covalently linked to a histidine residue through a N-P bond.

It catalyses the reaction [phosphate](n) + ATP = [phosphate](n+1) + ADP. Functionally, catalyzes the reversible transfer of the terminal phosphate of ATP to form a long-chain polyphosphate (polyP). This chain is Polyphosphate kinase, found in Staphylococcus haemolyticus (strain JCSC1435).